We begin with the raw amino-acid sequence, 632 residues long: Pentatricopeptide repeat-containing protein ELI1, chloroplastic (632 aa).

The transit peptide at 1 to 19 (MASSPLLATSLPQNQLSTT) directs the protein to the chloroplast. PPR repeat units lie at residues 94-128 (DLFLFTAAINTASINGLKDQAFLLYVQLLSSEINP), 129-159 (NEFTFSSLLKSCSTKSGKLIHTHVLKFGLGI), 160-194 (DPYVATGLVDVYAKGGDVVSAQKVFDRMPERSLVS), 196-221 (TAMITCYAKQGNVEAARALFDSMCER), 222-256 (DIVSWNVMIDGYAQHGFPNDALMLFQKLLAEGKPK), 258-292 (DEITVVAALSACSQIGALETGRWIHVFVKSSRIRL), 293-323 (NVKVCTGLIDMYSKCGSLEEAVLVFNDTPRK), 324-354 (DIVAWNAMIAGYAMHGYSQDALRLFNEMQGI), 360-395 (TDITFIGTLQACAHAGLVNEGIRIFESMGQEYGIKP), and 396-426 (KIEHYGCLVSLLGRAGQLKRAYETIKNMNMD). The type E motif stretch occupies residues 431-506 (LWSSVLGSCK…EPGISTIEIE (76 aa)). Residues 497–512 (EPGISTIEIENKVHEF) are required for function in RNA editing. The interval 507 to 537 (NKVHEFRAGDREHSKSKEIYTMLRKISERIK) is type E(+) motif. Residues 538 to 632 (SHGYVPNTNT…DGSCSCGDFW (95 aa)) form a type DYW motif region.

It belongs to the PPR family. PCMP-H subfamily. The cofactor is Zn(2+).

The protein localises to the plastid. It is found in the chloroplast. Functionally, plays a major role in single RNA editing events in chloroplasts. Acts as a site-recognition transacting factor involved in the edition of the site 5 of ndhB1 and ndhB2 (ndhB1-5 and ndhB2-5 sites corresponding to cytidine-830), which are plastid-encoded subunits of the NADH-plastoquinone oxidoreductase. May provide the catalytic activity for editing site conversion. The chain is Pentatricopeptide repeat-containing protein ELI1, chloroplastic from Arabidopsis thaliana (Mouse-ear cress).